A 292-amino-acid polypeptide reads, in one-letter code: Phosphatidylserine decarboxylase proenzyme (292 aa).

Residues Asp-89, His-146, and Ser-252 each act as charge relay system; for autoendoproteolytic cleavage activity in the active site. Residue Ser-252 is the Schiff-base intermediate with substrate; via pyruvic acid; for decarboxylase activity of the active site. Residue Ser-252 is modified to Pyruvic acid (Ser); by autocatalysis.

Belongs to the phosphatidylserine decarboxylase family. PSD-B subfamily. Prokaryotic type I sub-subfamily. Heterodimer of a large membrane-associated beta subunit and a small pyruvoyl-containing alpha subunit. Pyruvate serves as cofactor. In terms of processing, is synthesized initially as an inactive proenzyme. Formation of the active enzyme involves a self-maturation process in which the active site pyruvoyl group is generated from an internal serine residue via an autocatalytic post-translational modification. Two non-identical subunits are generated from the proenzyme in this reaction, and the pyruvate is formed at the N-terminus of the alpha chain, which is derived from the carboxyl end of the proenzyme. The autoendoproteolytic cleavage occurs by a canonical serine protease mechanism, in which the side chain hydroxyl group of the serine supplies its oxygen atom to form the C-terminus of the beta chain, while the remainder of the serine residue undergoes an oxidative deamination to produce ammonia and the pyruvoyl prosthetic group on the alpha chain. During this reaction, the Ser that is part of the protease active site of the proenzyme becomes the pyruvoyl prosthetic group, which constitutes an essential element of the active site of the mature decarboxylase.

Its subcellular location is the cell membrane. It carries out the reaction a 1,2-diacyl-sn-glycero-3-phospho-L-serine + H(+) = a 1,2-diacyl-sn-glycero-3-phosphoethanolamine + CO2. Its pathway is phospholipid metabolism; phosphatidylethanolamine biosynthesis; phosphatidylethanolamine from CDP-diacylglycerol: step 2/2. In terms of biological role, catalyzes the formation of phosphatidylethanolamine (PtdEtn) from phosphatidylserine (PtdSer). This is Phosphatidylserine decarboxylase proenzyme from Shewanella baltica (strain OS223).